The following is a 305-amino-acid chain: tRNA pseudouridine synthase B (305 aa).

The Nucleophile role is filled by aspartate 50.

The protein belongs to the pseudouridine synthase TruB family. Type 1 subfamily.

It carries out the reaction uridine(55) in tRNA = pseudouridine(55) in tRNA. Functionally, responsible for synthesis of pseudouridine from uracil-55 in the psi GC loop of transfer RNAs. In Rhodococcus jostii (strain RHA1), this protein is tRNA pseudouridine synthase B.